The following is a 57-amino-acid chain: Large ribosomal subunit protein bL32 (57 aa).

This sequence belongs to the bacterial ribosomal protein bL32 family.

The sequence is that of Large ribosomal subunit protein bL32 from Geobacillus sp. (strain WCH70).